Consider the following 102-residue polypeptide: uncharacterized protein (102 aa).

This is an uncharacterized protein from Bacillus subtilis (strain 168).